The chain runs to 342 residues: Erlin-1 (342 aa).

Residues 1–6 (MAHVGA) are Cytoplasmic-facing. The chain crosses the membrane as a helical span at residues 7–23 (VVAAMAGLMAILLHSSI). At 24-342 (HKIEEGHLAV…ASKPKASEGH (319 aa)) the chain is on the lumenal side. The N-linked (GlcNAc...) asparagine glycan is linked to Asn-106. Residues 308–342 (SSASRPAAGESEQLESLSMRESLKKASKPKASEGH) are disordered.

The protein belongs to the band 7/mec-2 family.

The protein localises to the endoplasmic reticulum membrane. In terms of biological role, mediates the endoplasmic reticulum-associated degradation (ERAD) of inositol 1,4,5-trisphosphate receptors (IP3Rs). Involved in regulation of cellular cholesterol homeostasis by regulation the SREBP signaling pathway. Binds cholesterol and may promote ER retention of the SCAP-SREBF complex. The protein is Erlin-1 of Danio rerio (Zebrafish).